Consider the following 163-residue polypeptide: uncharacterized protein (163 aa).

This is an uncharacterized protein from Homo sapiens (Human).